We begin with the raw amino-acid sequence, 139 residues long: uncharacterized protein (139 aa).

This is an uncharacterized protein from Aquifex aeolicus (strain VF5).